The chain runs to 265 residues: 5'-nucleotidase SurE (265 aa).

Residues D8, D9, S40, and N98 each contribute to the a divalent metal cation site.

The protein belongs to the SurE nucleotidase family. A divalent metal cation is required as a cofactor.

The protein resides in the cytoplasm. It catalyses the reaction a ribonucleoside 5'-phosphate + H2O = a ribonucleoside + phosphate. Its function is as follows. Nucleotidase that shows phosphatase activity on nucleoside 5'-monophosphates. This chain is 5'-nucleotidase SurE, found in Thermosynechococcus vestitus (strain NIES-2133 / IAM M-273 / BP-1).